A 118-amino-acid chain; its full sequence is Small ribosomal subunit protein uS13 (118 aa).

The disordered stretch occupies residues 91–118 (HRHSLPVRGQRTKTNARTRKGPRKPIRK).

The protein belongs to the universal ribosomal protein uS13 family. As to quaternary structure, part of the 30S ribosomal subunit. Forms a loose heterodimer with protein S19. Forms two bridges to the 50S subunit in the 70S ribosome.

Located at the top of the head of the 30S subunit, it contacts several helices of the 16S rRNA. In the 70S ribosome it contacts the 23S rRNA (bridge B1a) and protein L5 of the 50S subunit (bridge B1b), connecting the 2 subunits; these bridges are implicated in subunit movement. Contacts the tRNAs in the A and P-sites. This is Small ribosomal subunit protein uS13 from Hahella chejuensis (strain KCTC 2396).